Consider the following 161-residue polypeptide: Endoribonuclease YbeY (161 aa).

His-121, His-125, and His-131 together coordinate Zn(2+).

The protein belongs to the endoribonuclease YbeY family. Zn(2+) is required as a cofactor.

Its subcellular location is the cytoplasm. Single strand-specific metallo-endoribonuclease involved in late-stage 70S ribosome quality control and in maturation of the 3' terminus of the 16S rRNA. This Xylella fastidiosa (strain 9a5c) protein is Endoribonuclease YbeY.